The chain runs to 289 residues: Enoyl-CoA hydratase domain-containing protein 3, mitochondrial (289 aa).

Residues Met1–Gly14 constitute a mitochondrion transit peptide.

The protein belongs to the enoyl-CoA hydratase/isomerase family.

The protein resides in the mitochondrion. May play a role in fatty acid biosynthesis and insulin sensitivity. In Danio rerio (Zebrafish), this protein is Enoyl-CoA hydratase domain-containing protein 3, mitochondrial (echdc3).